A 94-amino-acid polypeptide reads, in one-letter code: UPF0381 protein YfcZ (94 aa).

It belongs to the UPF0381 family.

This chain is UPF0381 protein YfcZ (yfcZ), found in Escherichia coli O6:H1 (strain CFT073 / ATCC 700928 / UPEC).